The primary structure comprises 235 residues: uncharacterized protein (235 aa).

This sequence to E.coli YbeU.

This is an uncharacterized protein from Escherichia coli (strain K12).